A 439-amino-acid polypeptide reads, in one-letter code: Lipoyl synthase, mitochondrial (439 aa).

The transit peptide at 1–37 (MVASARGLRTLHSAHSSISALPASTVPRLQLAVSRCY) directs the protein to the mitochondrion. Residues C150, C155, C161, C181, C185, C188, and S396 each contribute to the [4Fe-4S] cluster site. In terms of domain architecture, Radical SAM core spans 164-385 (GSSKSAATAT…KERALEMGFL (222 aa)).

This sequence belongs to the radical SAM superfamily. Lipoyl synthase family. The cofactor is [4Fe-4S] cluster.

It localises to the mitochondrion. The enzyme catalyses [[Fe-S] cluster scaffold protein carrying a second [4Fe-4S](2+) cluster] + N(6)-octanoyl-L-lysyl-[protein] + 2 oxidized [2Fe-2S]-[ferredoxin] + 2 S-adenosyl-L-methionine + 4 H(+) = [[Fe-S] cluster scaffold protein] + N(6)-[(R)-dihydrolipoyl]-L-lysyl-[protein] + 4 Fe(3+) + 2 hydrogen sulfide + 2 5'-deoxyadenosine + 2 L-methionine + 2 reduced [2Fe-2S]-[ferredoxin]. Its pathway is protein modification; protein lipoylation via endogenous pathway; protein N(6)-(lipoyl)lysine from octanoyl-[acyl-carrier-protein]: step 2/2. Its function is as follows. Catalyzes the radical-mediated insertion of two sulfur atoms into the C-6 and C-8 positions of the octanoyl moiety bound to the lipoyl domains of lipoate-dependent enzymes, thereby converting the octanoylated domains into lipoylated derivatives. This Paracoccidioides lutzii (strain ATCC MYA-826 / Pb01) (Paracoccidioides brasiliensis) protein is Lipoyl synthase, mitochondrial.